The sequence spans 282 residues: AB hydrolase superfamily protein FGSG_00045 (282 aa).

The segment covering 1 to 10 (MAPISSTRPS) has biased composition (polar residues). The tract at residues 1 to 22 (MAPISSTRPSHSIAADNPNPTT) is disordered. Positions 22-270 (TQVNFNTNMT…FADMVKRWII (249 aa)) constitute an AB hydrolase-1 domain.

Belongs to the AB hydrolase superfamily.

The protein operates within mycotoxin biosynthesis. In terms of biological role, AB hydrolase superfamily protein; part of the gene cluster that mediates the biosynthesis of gramillins A and B, bicyclic lipopeptides that induce cell death in maize leaves but not in wheat leaves. The nonribosomal peptide synthetase GRA1 incorporates respectively a glutamic adic (Glu), a leucine (Leu), a serine (Ser), a hydroxyglutamine (HOGln), a 2-amino decanoic acid, and 2 cysteins (CysB and CysA). The biosynthesis of 2-amino decanoic acid incorporated in gramillins could be initiated by a fatty acid synthase composed of the alpha and beta subunits FGSG_00036 and FGSG_11656. The cytochrome P450 monooxygenase FGSG_15680 could hydroxylate the fatty acid chain. Subsequent oxidation to the ketone by the oxidoreductase FGSG_00048 and transamination by aminotransferase FGSG_00049 could form 2-amino-decanoic acid. On the other hand, FGSG_15680 could also be responsible for the HO-modified glutamine at the gamma-position. Whether hydroxylation occurs on the fully assembled product or on the Gln residue prior to assembly into the gramillins requires further proof. The thioredoxin FGSG_00043 could also be required for the disulfide-bond formation between CysA and CysB. The specific involvement of the remaining proteins from the cluster is more difficult to discern, but could have broader regulatory (FGSG_00040 and FGSG_11657) or enzymatic functions (FGSG_00044 and FGSG_00045). The final C-domain of GRA1 does not possess the expected sequence of a termination CT domain, often implicated in macrocyclization and release of a cyclopeptidein fungal NRPs; and the thioesterase FGSG_00047 may act in concert with the terminal C-domain of GRA1 to catalyze the formation of the macrocyclic anhydride and release of the products. In Gibberella zeae (strain ATCC MYA-4620 / CBS 123657 / FGSC 9075 / NRRL 31084 / PH-1) (Wheat head blight fungus), this protein is AB hydrolase superfamily protein FGSG_00045.